A 642-amino-acid polypeptide reads, in one-letter code: MYTSRLLLSNLASCLSLATLVASFPANQQDLTFAKRNGTFEQSVFYGLTGPEVEAKLAKLKADGYRPTSLNIHGSTSDAKYAGIWTKQTGDDFETILGANKTVYDAWLDSHKAQGYVSTHVSATGGSSDALFAGVMEKVPSVANWIQVCGLDNPYAYANATIDEPMYIKGVSMYGAPNERQYCILGHENLVNYQQTVFYQTDYFKKDYAKLLQSETSKRHWRPVFIDLSEDLLPTPIFDDTSVGQWVARTDLSASELEAEIAAQKAKNLYAVHIAGAGSKGSKYAVLFAEHLSPLERKWTVTGEVTGFKTNDVVAKDMDAVMEEFMKKNSVRQAQVAASVNGTVVAERSYTWAESDRAVVKPTDKFGLGSVSKMFTYAATTNLLNEGLLNHTTRVYPFLGMNNPADNRSLDITVDHLLQHTAGYNRDIKPDIGFIFRNIALERNQTTPVSLRELIEYVYEQPLDFTPGTDSVYSNYGTMLLSYLIANITGESFNSYIHKNVLNGLDVELYPTSPELNANNPIVQETKYTFYPAQDPASTKQVSNANGGDGSIREEAIGAFGLRASASTISQFLANHAAYDIGPRQAYTYRDGTIVGSRAFAQSQDLIDWSLILNTREYESEQKWEQLVFGPISQWYKYALAE.

The N-terminal stretch at 1-23 (MYTSRLLLSNLASCLSLATLVAS) is a signal peptide. 4 N-linked (GlcNAc...) asparagine glycosylation sites follow: Asn-37, Asn-100, Asn-159, and Asn-341. Cys-149 and Cys-183 are joined by a disulfide. Residue Ser-370 is part of the active site. N-linked (GlcNAc...) asparagine glycosylation is found at Asn-390, Asn-407, Asn-444, Asn-487, and Asn-494.

Belongs to the peptidase S12 family.

The protein localises to the secreted. The catalysed reaction is a glycyl-glycyl-[protein] + H2O = N-terminal glycyl-[protein] + [protein]-C-terminal glycine. Not inhibited by phenylmethylsulfonyl fluoride (PMSF; serine peptidase class S1 inhibitor), clavulanic acid (beta-lactamase inhibitor) or ampicillin (penicillin-binding protein (PBP) inhibitor). Its function is as follows. Serine-type endopeptidase that cleaves Gly-Gly bonds in the polyglycine linker of host plant class IV chitinases to disrupt their chitin-binding, and thereby plays a role in lowering the defense responses of the host to the fungus. Degrades Z.mays Endochitinase A (CHIA). Degrades Z.mays Endochitinase B (CHIB). Has no activity on Z.mays CHIA following CHIA cleavage by fungalysin. This chain is Polyglycine hydrolase, found in Epicoccum sorghinum (Endophyte fungus).